A 270-amino-acid polypeptide reads, in one-letter code: Tryptophan synthase alpha chain (270 aa).

Catalysis depends on proton acceptor residues glutamate 57 and aspartate 68.

This sequence belongs to the TrpA family. Tetramer of two alpha and two beta chains.

The catalysed reaction is (1S,2R)-1-C-(indol-3-yl)glycerol 3-phosphate + L-serine = D-glyceraldehyde 3-phosphate + L-tryptophan + H2O. It functions in the pathway amino-acid biosynthesis; L-tryptophan biosynthesis; L-tryptophan from chorismate: step 5/5. In terms of biological role, the alpha subunit is responsible for the aldol cleavage of indoleglycerol phosphate to indole and glyceraldehyde 3-phosphate. The sequence is that of Tryptophan synthase alpha chain from Mycobacterium bovis (strain ATCC BAA-935 / AF2122/97).